A 188-amino-acid polypeptide reads, in one-letter code: MMHPVASSNPAFCGPGKPSCLNEDAMRAADQFDIYSSQQSKYSHTVNHKPMVCQRQDPLNETHLQTTSGRSIEIKDELKKKKNLNRSGKRGRPSGTTKSAGYRTSTGRPLGTTKAAGFKTSPGRPLGTTKAAGYKVSPGRPPGSIKALSRLADLGYGCGTAAFPYPMMHGRAVHGVEETSSEVKPPNE.

Positions 1–10 (MMHPVASSNP) are enriched in polar residues. The disordered stretch occupies residues 1–20 (MMHPVASSNPAFCGPGKPSC). Ser-37 is subject to Phosphoserine. A Glycyl lysine isopeptide (Lys-Gly) (interchain with G-Cter in SUMO2) cross-link involves residue Lys-75. Positions 79-142 (KKKKNLNRSG…GYKVSPGRPP (64 aa)) are disordered. A compositionally biased stretch (basic residues) spans 80 to 92 (KKKNLNRSGKRGR). The span at 94–107 (SGTTKSAGYRTSTG) shows a compositional bias: polar residues. 2 positions are modified to phosphoserine: Ser-121 and Ser-180. A Glycyl lysine isopeptide (Lys-Gly) (interchain with G-Cter in SUMO2) cross-link involves residue Lys-184.

This sequence belongs to the UPF0461 family.

This chain is UPF0461 protein C5orf24 (C5orf24), found in Homo sapiens (Human).